A 364-amino-acid polypeptide reads, in one-letter code: MHITQLVLRHFRCFDVVDFFPLPGLNFFIGENGSGKTSLLEAVHLMGYGRSFRGRVRDGLIRHGSENLEIFVDWQETALINARRRRAGLSHYGQEWIGRLDGQKIMHLASLCAALAVITFESSSYQLINSNAELRRRFLDWGLFHVEPDFLDLWRRYTHVLKQRNSLLKQKEELAMLEAWDQKLSEVGEQLTFRRFQYLERLKQRVIPLISRITPNLKIHGFNFNHGWRRHELPLIDALFISRERDYQYGYTSLGPHRSDWTPQFSSIPGVHFLSRGQGKLITLMCLLAQAQDFFDQRGEWPILALDDLASELDQKHQWRVLEMLAEIPAQVLITGTEIPQGLKPFFSVGAMFHVEHGAITRMF.

30-37 (GENGSGKT) provides a ligand contact to ATP.

The protein belongs to the RecF family.

The protein localises to the cytoplasm. The RecF protein is involved in DNA metabolism; it is required for DNA replication and normal SOS inducibility. RecF binds preferentially to single-stranded, linear DNA. It also seems to bind ATP. This Xylella fastidiosa (strain M23) protein is DNA replication and repair protein RecF.